Reading from the N-terminus, the 108-residue chain is MDAQGDAGAQGGSQGPRPSNKRLQQTQAQVDEVVGIMKVNVEKVLERDQKLSQLDDRADALQEGASQFEKSAATLKRKYWWKNIKMMIIMCAIVVILIIIIVLWAGGK.

Positions 1 to 25 are disordered; the sequence is MDAQGDAGAQGGSQGPRPSNKRLQQ. The Cytoplasmic portion of the chain corresponds to 1–85; that stretch reads MDAQGDAGAQ…KRKYWWKNIK (85 aa). One can recognise a v-SNARE coiled-coil homology domain in the interval 22 to 82; that stretch reads RLQQTQAQVD…ATLKRKYWWK (61 aa). Residues 86-106 form a helical; Anchor for type IV membrane protein membrane-spanning segment; it reads MMIIMCAIVVILIIIIVLWAG. Residues 107–108 lie on the Extracellular side of the membrane; it reads GK.

This sequence belongs to the synaptobrevin family. Part of the SNARE core complex containing CBG09569/SNAP25, snb-1/VAMP2 and CBG03570/STX1A. This complex binds to cpx-1/CPLX1.

The protein resides in the cytoplasmic vesicle. It is found in the secretory vesicle. The protein localises to the synaptic vesicle membrane. Its subcellular location is the cell membrane. It localises to the synapse. The protein resides in the synaptosome. In terms of biological role, involved in the targeting and/or fusion of transport vesicles to their target membrane. Acts in neuronal exocytosis of synaptic transmission. Likely to have a role in cholinergic transmisson. Required for viability, coordinated movement and M3 pharynx motor neuron function. The protein is Synaptobrevin-1 of Caenorhabditis briggsae.